Here is a 136-residue protein sequence, read N- to C-terminus: Protein PsiE homolog (136 aa).

4 consecutive transmembrane segments (helical) span residues 15-35, 58-78, 82-102, and 108-128; these read AMQA…VVFL, VEGL…VKYF, FHFP…RLII, and PLAV…LWLC.

This sequence belongs to the PsiE family.

It localises to the cell inner membrane. The chain is Protein PsiE homolog from Klebsiella pneumoniae subsp. pneumoniae (strain ATCC 700721 / MGH 78578).